Consider the following 100-residue polypeptide: Putative protein adenylyltransferase MJ0604 (100 aa).

The GSX(10)DXD motif signature appears at 29–43; sequence GSYARGDYTEESDID. Mg(2+) is bound by residues Asp-41 and Asp-43.

The protein belongs to the MntA antitoxin family. Requires Mg(2+) as cofactor.

The catalysed reaction is L-tyrosyl-[protein] + ATP = O-(5'-adenylyl)-L-tyrosyl-[protein] + diphosphate. It catalyses the reaction O-(5'-adenylyl)-L-tyrosyl-[protein] + ATP = O-[5'-(adenylyl-(5'-&gt;3')-adenylyl)]-L-tyrosyl-[protein] + diphosphate. In terms of biological role, putative antitoxin component of a putative type VII toxin-antitoxin (TA) system. Its cognate toxin might be MJ0605, which it might AMPylate. The protein is Putative protein adenylyltransferase MJ0604 of Methanocaldococcus jannaschii (strain ATCC 43067 / DSM 2661 / JAL-1 / JCM 10045 / NBRC 100440) (Methanococcus jannaschii).